A 342-amino-acid polypeptide reads, in one-letter code: MIKVGIVGGTGYTGVELLRLLARHPEVELKAITSRKEAGMPVADMFPNLRGRVGLAFSTPEEAGLETCDVVFFATPNGVAMQQTRALLDAGVKVIDLAADFRIKDVAEWQKWYKMEHACPDLVDEAVYGLPEINRDKIKAARLIANPGCYPTAVQLGFLPLLEAGVAETGTLIADAKSGVSGAGRKAETHILFAEAADNFKAYAVGGHRHWPEIKQGLEIFAGGPVGFTFVPHLTPLIRGIHATLYARVSADVDLQALYEKRYTDEAFVDVMPAGACPETRSVRGANVCRIAVHRQQGSDMVIVLSVIDNLVKGAAGQAVQNMNILFGLAEDTALSDVGMLP.

Cysteine 149 is a catalytic residue.

The protein belongs to the NAGSA dehydrogenase family. Type 1 subfamily.

Its subcellular location is the cytoplasm. The enzyme catalyses N-acetyl-L-glutamate 5-semialdehyde + phosphate + NADP(+) = N-acetyl-L-glutamyl 5-phosphate + NADPH + H(+). It functions in the pathway amino-acid biosynthesis; L-arginine biosynthesis; N(2)-acetyl-L-ornithine from L-glutamate: step 3/4. Functionally, catalyzes the NADPH-dependent reduction of N-acetyl-5-glutamyl phosphate to yield N-acetyl-L-glutamate 5-semialdehyde. In Thiobacillus denitrificans (strain ATCC 25259 / T1), this protein is N-acetyl-gamma-glutamyl-phosphate reductase.